The chain runs to 244 residues: 2,5-diamino-6-ribosylamino-4(3H)-pyrimidinone 5'-phosphate reductase (244 aa).

Residues T74, D78, I160, and 183 to 187 (GSHVI) each bind NADP(+).

The protein belongs to the HTP reductase family. In terms of assembly, homodimer.

The catalysed reaction is 2,5-diamino-6-(1-D-ribitylamino)pyrimidin-4(3H)-one 5'-phosphate + NADP(+) = 2,5-diamino-6-(1-D-ribosylamino)pyrimidin-4(3H)-one 5'-phosphate + NADPH + H(+). It catalyses the reaction 2,5-diamino-6-(1-D-ribitylamino)pyrimidin-4(3H)-one 5'-phosphate + NAD(+) = 2,5-diamino-6-(1-D-ribosylamino)pyrimidin-4(3H)-one 5'-phosphate + NADH + H(+). It participates in cofactor biosynthesis; riboflavin biosynthesis. In terms of biological role, catalyzes an early step in riboflavin biosynthesis, the NADPH-dependent reduction of the ribose side chain of 2,5-diamino-6-ribosylamino-4(3H)-pyrimidinone 5'-phosphate, yielding 2,5-diamino-6-ribitylamino-4(3H)-pyrimidinone 5'-phosphate. This chain is 2,5-diamino-6-ribosylamino-4(3H)-pyrimidinone 5'-phosphate reductase (RIB7), found in Candida glabrata (strain ATCC 2001 / BCRC 20586 / JCM 3761 / NBRC 0622 / NRRL Y-65 / CBS 138) (Yeast).